The following is a 303-amino-acid chain: Glycine--tRNA ligase alpha subunit (303 aa).

It belongs to the class-II aminoacyl-tRNA synthetase family. In terms of assembly, tetramer of two alpha and two beta subunits.

It is found in the cytoplasm. It catalyses the reaction tRNA(Gly) + glycine + ATP = glycyl-tRNA(Gly) + AMP + diphosphate. This is Glycine--tRNA ligase alpha subunit from Bordetella pertussis (strain Tohama I / ATCC BAA-589 / NCTC 13251).